Here is a 677-residue protein sequence, read N- to C-terminus: Levanase (677 aa).

Positions 1-24 (MKKRLIQVMIMFTLLLTMAFSADA) are cleaved as a signal peptide. Substrate is bound by residues 46 to 49 (WMND), glutamine 65, tryptophan 73, 105 to 106 (FS), 171 to 172 (RD), glutamate 223, and tryptophan 313. Aspartate 49 is a catalytic residue.

Belongs to the glycosyl hydrolase 32 family.

It localises to the secreted. The catalysed reaction is Hydrolysis of terminal, non-reducing (2-&gt;1)- and (2-&gt;6)-linked beta-D-fructofuranose residues in fructans.. With respect to regulation, is completely inhibited by Ag(+) and Hg(2+) ions. Exo-fructosidase that can hydrolyze both levan and inulin, leading to the production of free fructose. Is also able to hydrolyze sucrose and to a small extent raffinose, but not melezitose, stachylose, cellobiose, maltose, and lactose. The sequence is that of Levanase (sacC) from Bacillus subtilis (strain 168).